The sequence spans 777 residues: Subtilisin-like protease SBT3.7 (777 aa).

A signal peptide spans 1-22 (MRNHRTSIFVVLSLVIILNGQS). Positions 23–113 (GFLPRAGAES…VIPDRFYKPA (91 aa)) are cleaved as a propeptide — activation peptide. An Inhibitor I9 domain is found at 34–111 (VHIVYLGEKQ…VHVIPDRFYK (78 aa)). One can recognise a Peptidase S8 domain in the interval 117-624 (TWDYLGLSPT…GGLVNPEKAT (508 aa)). N-linked (GlcNAc...) asparagine glycosylation occurs at asparagine 133. Residue aspartate 147 is the Charge relay system of the active site. N-linked (GlcNAc...) asparagine glycans are attached at residues asparagine 180 and asparagine 206. Residue histidine 222 is the Charge relay system of the active site. Asparagine 237, asparagine 397, asparagine 412, and asparagine 540 each carry an N-linked (GlcNAc...) asparagine glycan. Positions 386-481 (SLVYPENPGN…ELGTYILFYI (96 aa)) constitute a PA domain. The active-site Charge relay system is the serine 555. 3 N-linked (GlcNAc...) asparagine glycosylation sites follow: asparagine 647, asparagine 723, and asparagine 758.

The protein belongs to the peptidase S8 family.

It localises to the secreted. This chain is Subtilisin-like protease SBT3.7, found in Arabidopsis thaliana (Mouse-ear cress).